We begin with the raw amino-acid sequence, 332 residues long: Nucleoid-associated protein VIBHAR_03026 (332 aa).

It belongs to the YejK family.

It is found in the cytoplasm. It localises to the nucleoid. This chain is Nucleoid-associated protein VIBHAR_03026, found in Vibrio campbellii (strain ATCC BAA-1116).